A 127-amino-acid chain; its full sequence is Small ribosomal subunit protein uS11 (127 aa).

The protein belongs to the universal ribosomal protein uS11 family. Part of the 30S ribosomal subunit. Interacts with proteins S7 and S18. Binds to IF-3.

Located on the platform of the 30S subunit, it bridges several disparate RNA helices of the 16S rRNA. Forms part of the Shine-Dalgarno cleft in the 70S ribosome. This Anaeromyxobacter dehalogenans (strain 2CP-C) protein is Small ribosomal subunit protein uS11.